The sequence spans 274 residues: Large ribosomal subunit protein uL2 (274 aa).

Disordered stretches follow at residues 34 to 54 and 224 to 261; these read LEKKSKSGGRNNNGRITTRHI and VAMNPVDHPHGGGEGRTSGGRHPVSPWGFPTKGAKTRA.

It belongs to the universal ribosomal protein uL2 family. In terms of assembly, part of the 50S ribosomal subunit. Forms a bridge to the 30S subunit in the 70S ribosome.

Its function is as follows. One of the primary rRNA binding proteins. Required for association of the 30S and 50S subunits to form the 70S ribosome, for tRNA binding and peptide bond formation. It has been suggested to have peptidyltransferase activity; this is somewhat controversial. Makes several contacts with the 16S rRNA in the 70S ribosome. This is Large ribosomal subunit protein uL2 from Ectopseudomonas mendocina (strain ymp) (Pseudomonas mendocina).